The chain runs to 230 residues: Flagellar L-ring protein (230 aa).

The N-terminal stretch at 1 to 21 (MMLKTVLRLPVCAALLALAAG) is a signal peptide. Residue Cys-22 is the site of N-palmitoyl cysteine attachment. Cys-22 is lipidated: S-diacylglycerol cysteine. A disordered region spans residues 34-53 (PLTAPPPPPPQPSARPNGSI). Residues 36–46 (TAPPPPPPQPS) show a composition bias toward pro residues.

It belongs to the FlgH family. As to quaternary structure, the basal body constitutes a major portion of the flagellar organelle and consists of four rings (L,P,S, and M) mounted on a central rod.

It localises to the cell outer membrane. It is found in the bacterial flagellum basal body. Assembles around the rod to form the L-ring and probably protects the motor/basal body from shearing forces during rotation. This is Flagellar L-ring protein from Bordetella parapertussis (strain 12822 / ATCC BAA-587 / NCTC 13253).